The following is a 180-amino-acid chain: Large ribosomal subunit protein uL6 (180 aa).

It belongs to the universal ribosomal protein uL6 family. As to quaternary structure, part of the 50S ribosomal subunit.

Functionally, this protein binds to the 23S rRNA, and is important in its secondary structure. It is located near the subunit interface in the base of the L7/L12 stalk, and near the tRNA binding site of the peptidyltransferase center. This chain is Large ribosomal subunit protein uL6, found in Mycoplasma capricolum subsp. capricolum (strain California kid / ATCC 27343 / NCTC 10154).